Reading from the N-terminus, the 224-residue chain is UPF0173 metal-dependent hydrolase TK0141 (224 aa).

Belongs to the UPF0173 family.

This is UPF0173 metal-dependent hydrolase TK0141 from Thermococcus kodakarensis (strain ATCC BAA-918 / JCM 12380 / KOD1) (Pyrococcus kodakaraensis (strain KOD1)).